Reading from the N-terminus, the 352-residue chain is Secretion system apparatus protein SsaU (352 aa).

Transmembrane regions (helical) follow at residues 34 to 54 (LIALYLYFHFFTEKMILILIE), 89 to 109 (LGAGVIVATVGSVFLQVGVVI), 144 to 164 (LKVIMLSLIFAFFFYYYASTF), and 176 to 196 (VLVVSSLIKWLWVGVMVFYIV).

This sequence belongs to the type III secretion exporter family.

The protein localises to the cell membrane. Its function is as follows. Part of a type III secretion system. The protein is Secretion system apparatus protein SsaU (ssaU) of Salmonella typhimurium (strain LT2 / SGSC1412 / ATCC 700720).